The following is a 146-amino-acid chain: Hemoglobin subunit beta-1 (146 aa).

Residues 2 to 146 (HWTEKERTII…VVSALGKQYH (145 aa)) enclose the Globin domain. Heme b is bound by residues His-63 and His-92.

Belongs to the globin family. Hb1 is a heterotetramer of two alpha chains and two beta-1 chains. Red blood cells.

Functionally, involved in oxygen transport from gills to the various peripheral tissues. This Dissostichus eleginoides (Patagonian toothfish) protein is Hemoglobin subunit beta-1.